We begin with the raw amino-acid sequence, 702 residues long: Elongation factor G (702 aa).

One can recognise a tr-type G domain in the interval 8 to 196 (ERYRNIGISA…MKAIIWDEAS (189 aa)). GTP contacts are provided by residues 17–24 (AHIDAGKT), 88–92 (DTPGH), and 142–145 (NKMD).

This sequence belongs to the TRAFAC class translation factor GTPase superfamily. Classic translation factor GTPase family. EF-G/EF-2 subfamily.

The protein resides in the cytoplasm. Its function is as follows. Catalyzes the GTP-dependent ribosomal translocation step during translation elongation. During this step, the ribosome changes from the pre-translocational (PRE) to the post-translocational (POST) state as the newly formed A-site-bound peptidyl-tRNA and P-site-bound deacylated tRNA move to the P and E sites, respectively. Catalyzes the coordinated movement of the two tRNA molecules, the mRNA and conformational changes in the ribosome. This chain is Elongation factor G (fusA), found in Thiomonas delicata (Thiomonas cuprina).